The primary structure comprises 397 residues: L-asparaginase-like protein GD25160 (397 aa).

The first 22 residues, 1-22, serve as a signal peptide directing secretion; it reads MLAQSCCLRLLILLLLFTSICS. 3 disulfides stabilise this stretch: C90/C95, C189/C205, and C344/C371.

Belongs to the Ntn-hydrolase family.

This Drosophila simulans (Fruit fly) protein is L-asparaginase-like protein GD25160.